A 339-amino-acid polypeptide reads, in one-letter code: Ornithine carbamoyltransferase, catabolic (339 aa).

Carbamoyl phosphate-binding positions include 57–60, Q84, R108, and 135–138; these read STRT and HPTQ. L-ornithine is bound by residues N167, D231, and 235–236; that span reads SM. Residues 274-275 and R319 contribute to the carbamoyl phosphate site; that span reads CL.

This sequence belongs to the aspartate/ornithine carbamoyltransferase superfamily. OTCase family.

It localises to the cytoplasm. The enzyme catalyses carbamoyl phosphate + L-ornithine = L-citrulline + phosphate + H(+). It participates in amino-acid degradation; L-arginine degradation via ADI pathway; carbamoyl phosphate from L-arginine: step 2/2. Reversibly catalyzes the transfer of the carbamoyl group from carbamoyl phosphate (CP) to the N(epsilon) atom of ornithine (ORN) to produce L-citrulline. The chain is Ornithine carbamoyltransferase, catabolic (arcB) from Enterococcus faecalis (strain ATCC 700802 / V583).